Consider the following 190-residue polypeptide: Segregation and condensation protein B (190 aa).

It belongs to the ScpB family. Homodimer. Homodimerization may be required to stabilize the binding of ScpA to the Smc head domains. Component of a cohesin-like complex composed of ScpA, ScpB and the Smc homodimer, in which ScpA and ScpB bind to the head domain of Smc. The presence of the three proteins is required for the association of the complex with DNA.

It is found in the cytoplasm. Participates in chromosomal partition during cell division. May act via the formation of a condensin-like complex containing Smc and ScpA that pull DNA away from mid-cell into both cell halves. In Bacillus cereus (strain G9842), this protein is Segregation and condensation protein B.